The chain runs to 300 residues: tRNA-cytidine(32) 2-sulfurtransferase (300 aa).

A PP-loop motif motif is present at residues 57–62 (SGGKDS). Residues Cys132, Cys135, and Cys223 each contribute to the [4Fe-4S] cluster site.

This sequence belongs to the TtcA family. As to quaternary structure, homodimer. Mg(2+) serves as cofactor. Requires [4Fe-4S] cluster as cofactor.

It is found in the cytoplasm. The enzyme catalyses cytidine(32) in tRNA + S-sulfanyl-L-cysteinyl-[cysteine desulfurase] + AH2 + ATP = 2-thiocytidine(32) in tRNA + L-cysteinyl-[cysteine desulfurase] + A + AMP + diphosphate + H(+). The protein operates within tRNA modification. In terms of biological role, catalyzes the ATP-dependent 2-thiolation of cytidine in position 32 of tRNA, to form 2-thiocytidine (s(2)C32). The sulfur atoms are provided by the cysteine/cysteine desulfurase (IscS) system. This chain is tRNA-cytidine(32) 2-sulfurtransferase, found in Xanthomonas campestris pv. campestris (strain B100).